The chain runs to 442 residues: MAANTISLSNVAASKNLNSFQSRAFIAPPTIFFPVASAKSKPGELSLSSTTLSRSRVRAGASQLMNEPLNDQRSISSPTVVEVDLGDRSYPIYIGAGLLDHSELLQRHVHGKRVLVVTNDRVAPLYLDKTIDALTRGNPNVTVESVILPDGEKYKDMDTLMKVFDKAIESRLDRRCTFVALGGGVIGDMCGYAAASYLRGVNFIQIPTTVMAQVDSSVGGKTGINHRLGKNLIGAFYQPQCVLVDTDTLNTLPDREMASGLAEVIKYGLIRDAEFFEWQEKNIEALLARDPAALAFAIKRSCENKADVVSQDEKESGLRATLNLGHTFGHAIETGFGYGEWLHGEAVAAGTVMAVDMSYRLGWIDESIVKRVNKILVRAKLPTTPPESMTVSMFKSIMAVDKKVADGLLRLILLKGPLGNCVFTGDYDREALDATLRAFSKS.

The N-terminal 58 residues, 1-58 (MAANTISLSNVAASKNLNSFQSRAFIAPPTIFFPVASAKSKPGELSLSSTTLSRSRVR), are a transit peptide targeting the chloroplast. The residue at position 59 (alanine 59) is an N-acetylalanine. NAD(+) contacts are provided by residues asparagine 119, 150 to 152 (DGE), lysine 155, 183 to 188 (GGVIGD), 208 to 209 (TT), lysine 221, lysine 230, and 248 to 251 (TLNT). Position 263 (glutamate 263) interacts with a divalent metal cation. Lysine 305 provides a ligand contact to NAD(+). Residues histidine 326 and histidine 343 each coordinate a divalent metal cation.

It belongs to the sugar phosphate cyclases superfamily. Dehydroquinate synthase family. As to quaternary structure, homodimer. A divalent metal cation is required as a cofactor. The cofactor is NAD(+).

The protein localises to the plastid. It is found in the chloroplast. It catalyses the reaction 7-phospho-2-dehydro-3-deoxy-D-arabino-heptonate = 3-dehydroquinate + phosphate. The protein operates within metabolic intermediate biosynthesis; chorismate biosynthesis; chorismate from D-erythrose 4-phosphate and phosphoenolpyruvate: step 2/7. Functionally, catalyzes the second step in the shikimate pathway. This chain is 3-dehydroquinate synthase, chloroplastic (DHQS), found in Arabidopsis thaliana (Mouse-ear cress).